Consider the following 337-residue polypeptide: Fructose-1,6-bisphosphatase class 1 (337 aa).

4 residues coordinate Mg(2+): Glu94, Asp116, Leu118, and Asp119. Residues 119-122 (DGSS), Asn210, and Lys276 contribute to the substrate site. Glu282 contacts Mg(2+).

Belongs to the FBPase class 1 family. As to quaternary structure, homotetramer. Mg(2+) serves as cofactor.

Its subcellular location is the cytoplasm. It carries out the reaction beta-D-fructose 1,6-bisphosphate + H2O = beta-D-fructose 6-phosphate + phosphate. The protein operates within carbohydrate biosynthesis; gluconeogenesis. In Burkholderia orbicola (strain MC0-3), this protein is Fructose-1,6-bisphosphatase class 1.